A 324-amino-acid polypeptide reads, in one-letter code: tRNA dimethylallyltransferase (324 aa).

17–24 contacts ATP; that stretch reads GPTASGKT. 19–24 is a binding site for substrate; the sequence is TASGKT. Interaction with substrate tRNA regions lie at residues 42–45, 166–170, 251–256, and 284–291; these read DSAL, QRIQR, RCVGYR, and KRQITWLR.

Belongs to the IPP transferase family. In terms of assembly, monomer. It depends on Mg(2+) as a cofactor.

It carries out the reaction adenosine(37) in tRNA + dimethylallyl diphosphate = N(6)-dimethylallyladenosine(37) in tRNA + diphosphate. Functionally, catalyzes the transfer of a dimethylallyl group onto the adenine at position 37 in tRNAs that read codons beginning with uridine, leading to the formation of N6-(dimethylallyl)adenosine (i(6)A). This chain is tRNA dimethylallyltransferase, found in Burkholderia lata (strain ATCC 17760 / DSM 23089 / LMG 22485 / NCIMB 9086 / R18194 / 383).